The chain runs to 294 residues: Fatty acyl-CoA reductase Rv0547c (294 aa).

Residues serine 49, serine 50, isoleucine 52, arginine 72, aspartate 97, leucine 98, asparagine 124, tyrosine 192, lysine 196, valine 225, and threonine 227 each coordinate NADP(+). Residue tyrosine 192 is the Proton acceptor of the active site.

It belongs to the short-chain dehydrogenases/reductases (SDR) family.

Its subcellular location is the host mitochondrion. It carries out the reaction hexadecanal + NADP(+) + CoA = hexadecanoyl-CoA + NADPH + H(+). In terms of biological role, oxidoreductase that promotes the persistence of M.tuberculosis in host macrophages by reprogramming the fatty acid metabolism in host mitochondria. When localized in the host mitochondria, it potentially acts on unknown lipid substrates and converts them into products that directly or indirectly alter the lipid profile of the mitochondria. This change in lipid profile results in increased mitochondrial membrane fluidity, enhanced endogenous fatty acid oxidation and increased mitochondrial spare respiratory capacity. All these events eventually favor M.tuberculosis persistence in the host macrophages. In vitro, can catalyze the NADPH-dependent reduction of palmitoyl-CoA (hexadecanoyl-CoA). This Mycobacterium tuberculosis (strain ATCC 25618 / H37Rv) protein is Fatty acyl-CoA reductase Rv0547c.